The sequence spans 579 residues: Plastidial pyruvate kinase 2 (579 aa).

The transit peptide at 1–63 (MAQVVATRSI…SRRVVDTTVR (63 aa)) directs the protein to the chloroplast. A compositionally biased stretch (polar residues) spans 6 to 24 (ATRSIQGSMLSPNGGSVST). Residues 6 to 26 (ATRSIQGSMLSPNGGSVSTRS) form a disordered region. Arg140 contributes to the substrate binding site. K(+) contacts are provided by Asn142, Ser144, Asp175, and Thr176. 142–145 (NMSH) lines the ATP pocket. ATP is bound at residue Arg182. Residue Lys325 participates in substrate binding. Residue Glu327 coordinates Mg(2+). Residues Gly350, Asp351, and Thr383 each coordinate substrate. Asp351 contributes to the Mg(2+) binding site.

Belongs to the pyruvate kinase family. As to quaternary structure, oligomer of alpha and beta subunits. Mg(2+) is required as a cofactor. Requires K(+) as cofactor. In terms of tissue distribution, mostly expressed in seeds, and, to a lower extent, in roots, leaves (veins and trichomes), inflorescences, siliques, pollen (grains and tubes) and flowers (sepals and petals).

It localises to the plastid. The protein resides in the chloroplast stroma. The protein localises to the mitochondrion. It carries out the reaction pyruvate + ATP = phosphoenolpyruvate + ADP + H(+). Its pathway is carbohydrate degradation; glycolysis; pyruvate from D-glyceraldehyde 3-phosphate: step 5/5. In terms of biological role, required for plastidial pyruvate kinase activity. Involved in seed oil accumulation, embryo development and seed storage compounds mobilization upon germination. This chain is Plastidial pyruvate kinase 2 (PKP2), found in Arabidopsis thaliana (Mouse-ear cress).